The primary structure comprises 224 residues: Octanoyltransferase (224 aa).

The BPL/LPL catalytic domain occupies 38–213 (SATVDELWWV…YLVRRLGYSA (176 aa)). Substrate-binding positions include 77–84 (RGGQVTYH), 144–146 (SLG), and 157–159 (GLS). Cys-175 (acyl-thioester intermediate) is an active-site residue.

This sequence belongs to the LipB family.

The protein localises to the cytoplasm. The catalysed reaction is octanoyl-[ACP] + L-lysyl-[protein] = N(6)-octanoyl-L-lysyl-[protein] + holo-[ACP] + H(+). It participates in protein modification; protein lipoylation via endogenous pathway; protein N(6)-(lipoyl)lysine from octanoyl-[acyl-carrier-protein]: step 1/2. Its function is as follows. Catalyzes the transfer of endogenously produced octanoic acid from octanoyl-acyl-carrier-protein onto the lipoyl domains of lipoate-dependent enzymes. Lipoyl-ACP can also act as a substrate although octanoyl-ACP is likely to be the physiological substrate. The protein is Octanoyltransferase of Nitrosococcus oceani (strain ATCC 19707 / BCRC 17464 / JCM 30415 / NCIMB 11848 / C-107).